The primary structure comprises 442 residues: Ribosomal protein uS12 methylthiotransferase RimO (442 aa).

The region spanning 5-117 (PSIGVVSLGC…VLDAIHAALP (113 aa)) is the MTTase N-terminal domain. [4Fe-4S] cluster-binding residues include C14, C50, C79, C148, C152, and C155. Residues 134–371 (LTPPHYAYLK…MAVQEAISRQ (238 aa)) form the Radical SAM core domain. The TRAM domain maps to 374–441 (QRRVGQRQRV…AHDLYGMVVS (68 aa)).

The protein belongs to the methylthiotransferase family. RimO subfamily. It depends on [4Fe-4S] cluster as a cofactor.

It is found in the cytoplasm. The catalysed reaction is L-aspartate(89)-[ribosomal protein uS12]-hydrogen + (sulfur carrier)-SH + AH2 + 2 S-adenosyl-L-methionine = 3-methylsulfanyl-L-aspartate(89)-[ribosomal protein uS12]-hydrogen + (sulfur carrier)-H + 5'-deoxyadenosine + L-methionine + A + S-adenosyl-L-homocysteine + 2 H(+). In terms of biological role, catalyzes the methylthiolation of an aspartic acid residue of ribosomal protein uS12. The protein is Ribosomal protein uS12 methylthiotransferase RimO of Acidithiobacillus ferrooxidans (strain ATCC 53993 / BNL-5-31) (Leptospirillum ferrooxidans (ATCC 53993)).